The sequence spans 56 residues: Large ribosomal subunit protein bL33 (56 aa).

The protein belongs to the bacterial ribosomal protein bL33 family.

The protein is Large ribosomal subunit protein bL33 of Vibrio campbellii (strain ATCC BAA-1116).